A 209-amino-acid polypeptide reads, in one-letter code: Inorganic pyrophosphatase (209 aa).

Positions 38, 52, and 64 each coordinate substrate. Residues Asp92, Asp97, and Asp130 each contribute to the Mg(2+) site. A substrate-binding site is contributed by Tyr167.

It belongs to the PPase family. In terms of assembly, homohexamer. It depends on Mg(2+) as a cofactor.

It is found in the cytoplasm. The catalysed reaction is diphosphate + H2O = 2 phosphate + H(+). In terms of biological role, catalyzes the hydrolysis of inorganic pyrophosphate (PPi) forming two phosphate ions. The chain is Inorganic pyrophosphatase from Chlamydia trachomatis serovar L2 (strain ATCC VR-902B / DSM 19102 / 434/Bu).